The chain runs to 476 residues: MAAPRLPPARALSGVMVPAPIQDLEALRALTALFKEQRNRETAPRTIFQRVLDILKKSSHAVELACRDPSQVENLASSLQLITECFRCLRNACIECSVNQNSIRNLDAIGVAVDLILLFRELRVEQESLLTAFRCGLQFLGNIASRNEDSQSIVWVHAFPELFLSCLNHPDKKIVAYSSMILFTSLNHERMKELEENLNIAIDVIDAYQKHPESEWPFLIITDLFLKSPELVQAMFPKLNNQERVTLLDLMIAKITSDEPLTKDDIPVFLRHAELIASTFVDQCKTVLKLASEEPPDDEEALATIRLLDVLCEMTVNTELLGYLQVFPGLLERVIDLLRVIHVAGKETTNIFSNCGCVRAEGDISNVAEGFKSHLIRLIGNLCYKNKDNQDKVNELDGIPLILDNCNISDSNPFLTQWVIYAIRNLTEDNSQNQDLIAKMEEQGLADASLLKKVGFEVEKKGEKLILKSTRDTPKP.

Arg10 carries the omega-N-methylarginine modification. Phosphoserine is present on residues Ser13 and Ser78. At Thr83 the chain carries Phosphothreonine. Phosphoserine is present on Ser431.

Belongs to the ataxin-10 family. Homooligomer. Interacts with GNB2. Interacts with IQCB1. Interacts with OGT. Post-translationally, polyubiquitinated. Phosphorylation at Ser-13 by AURKB promotes the association of ATXN10 with PLK1. Phosphorylation at Ser-78 and Thr-83 by PLK1 may play a role in the regulation of cytokinesis and may stimulate the proteasome-mediated degradation of ATXN10.

It localises to the cytoplasm. The protein localises to the perinuclear region. It is found in the midbody. Its subcellular location is the cytoskeleton. The protein resides in the cilium basal body. It localises to the microtubule organizing center. The protein localises to the centrosome. It is found in the centriole. In terms of biological role, may play a role in the regulation of cytokinesis. May play a role in signaling by stimulating protein glycosylation. Induces neuritogenesis by activating the Ras-MAP kinase pathway and is necessary for the survival of cerebellar neurons. Does not appear to play a major role in ciliogenesis. This Pongo abelii (Sumatran orangutan) protein is Ataxin-10 (ATXN10).